Consider the following 345-residue polypeptide: Opioid-binding protein/cell adhesion molecule (345 aa).

The N-terminal stretch at 1–27 (MGVCGYLFLPWKCLVVVSLRLLFLVPT) is a signal peptide. Ig-like C2-type domains follow at residues 39 to 126 (PKAM…PKTS), 136 to 219 (PQIM…VKIT), and 223 to 310 (PPYI…ASIT). N-linked (GlcNAc...) asparagine glycans are attached at residues Asn44, Asn70, and Asn140. A disulfide bond links Cys57 and Cys115. Intrachain disulfides connect Cys157–Cys202 and Cys244–Cys296. N-linked (GlcNAc...) asparagine glycosylation is found at Asn285, Asn293, and Asn306. Asn322 is lipidated: GPI-anchor amidated asparagine. Residues 323–345 (SASRALACLWLSGTFFAHFFIKF) constitute a propeptide, removed in mature form.

Belongs to the immunoglobulin superfamily. IgLON family.

It is found in the cell membrane. Its function is as follows. Binds opioids in the presence of acidic lipids; probably involved in cell contact. The chain is Opioid-binding protein/cell adhesion molecule (Opcml) from Rattus norvegicus (Rat).